Consider the following 401-residue polypeptide: Phosphoglycerate kinase, cytosolic (401 aa).

Residues valine 24, aspartate 25, asparagine 27, arginine 41, serine 63, histidine 64, glycine 66, arginine 67, arginine 122, histidine 154, and arginine 155 each contribute to the (2R)-3-phosphoglycerate site. Glycine 200 serves as a coordination point for ADP. Position 200 (glycine 200) interacts with CDP. 2 residues coordinate AMP: lysine 202 and lysine 206. Lysine 206 provides a ligand contact to ATP. ADP is bound at residue glycine 224. CDP is bound at residue glycine 224. 2 residues coordinate AMP: glycine 225 and glycine 297. Glycine 225 and glycine 297 together coordinate ATP. Residues glycine 322 and phenylalanine 327 each contribute to the CDP site. Residue phenylalanine 327 coordinates ADP. Position 328 (glutamate 328) interacts with AMP. Positions 328, 359, and 360 each coordinate ATP. A Mg(2+)-binding site is contributed by aspartate 359.

This sequence belongs to the phosphoglycerate kinase family. As to quaternary structure, monomer. The cofactor is Mg(2+).

It is found in the cytoplasm. It catalyses the reaction (2R)-3-phosphoglycerate + ATP = (2R)-3-phospho-glyceroyl phosphate + ADP. Its pathway is carbohydrate degradation; glycolysis; pyruvate from D-glyceraldehyde 3-phosphate: step 2/5. This chain is Phosphoglycerate kinase, cytosolic, found in Nicotiana tabacum (Common tobacco).